Consider the following 364-residue polypeptide: 3-isopropylmalate dehydrogenase (364 aa).

Residue 78 to 89 (GPKWGTGAVRPE) participates in NAD(+) binding. Substrate-binding residues include arginine 96, arginine 106, arginine 135, and aspartate 224. 3 residues coordinate Mg(2+): aspartate 224, aspartate 249, and aspartate 253. Residue 288 to 299 (GSAPDLPANKVN) participates in NAD(+) binding.

This sequence belongs to the isocitrate and isopropylmalate dehydrogenases family. In terms of assembly, homodimer. Mg(2+) serves as cofactor. Mn(2+) is required as a cofactor.

It localises to the cytoplasm. The catalysed reaction is (2R,3S)-3-isopropylmalate + NAD(+) = 4-methyl-2-oxopentanoate + CO2 + NADH. Its pathway is amino-acid biosynthesis; L-leucine biosynthesis; L-leucine from 3-methyl-2-oxobutanoate: step 3/4. In terms of biological role, catalyzes the oxidation of 3-carboxy-2-hydroxy-4-methylpentanoate (3-isopropylmalate) to 3-carboxy-4-methyl-2-oxopentanoate. The product decarboxylates to 4-methyl-2 oxopentanoate. The sequence is that of 3-isopropylmalate dehydrogenase (LEU2) from Wickerhamomyces anomalus (strain ATCC 8168 / CBS 5759 / DSM 6766 / JCM 3585 / IAM 12210 / NCYC 432 / NBRC 10213 / NRRL Y-366 / AJ 5027) (Yeast).